Here is a 124-residue protein sequence, read N- to C-terminus: Small ribosomal subunit protein uS12 (124 aa).

Asp-89 carries the 3-methylthioaspartic acid modification.

Belongs to the universal ribosomal protein uS12 family. In terms of assembly, part of the 30S ribosomal subunit. Contacts proteins S8 and S17. May interact with IF1 in the 30S initiation complex.

With S4 and S5 plays an important role in translational accuracy. Its function is as follows. Interacts with and stabilizes bases of the 16S rRNA that are involved in tRNA selection in the A site and with the mRNA backbone. Located at the interface of the 30S and 50S subunits, it traverses the body of the 30S subunit contacting proteins on the other side and probably holding the rRNA structure together. The combined cluster of proteins S8, S12 and S17 appears to hold together the shoulder and platform of the 30S subunit. The sequence is that of Small ribosomal subunit protein uS12 from Shewanella sediminis (strain HAW-EB3).